Here is a 323-residue protein sequence, read N- to C-terminus: Lipoyl synthase (323 aa).

Residues cysteine 69, cysteine 74, cysteine 80, cysteine 95, cysteine 99, cysteine 102, and serine 310 each coordinate [4Fe-4S] cluster. In terms of domain architecture, Radical SAM core spans tryptophan 81–arginine 299.

Belongs to the radical SAM superfamily. Lipoyl synthase family. Requires [4Fe-4S] cluster as cofactor.

It is found in the cytoplasm. The enzyme catalyses [[Fe-S] cluster scaffold protein carrying a second [4Fe-4S](2+) cluster] + N(6)-octanoyl-L-lysyl-[protein] + 2 oxidized [2Fe-2S]-[ferredoxin] + 2 S-adenosyl-L-methionine + 4 H(+) = [[Fe-S] cluster scaffold protein] + N(6)-[(R)-dihydrolipoyl]-L-lysyl-[protein] + 4 Fe(3+) + 2 hydrogen sulfide + 2 5'-deoxyadenosine + 2 L-methionine + 2 reduced [2Fe-2S]-[ferredoxin]. Its pathway is protein modification; protein lipoylation via endogenous pathway; protein N(6)-(lipoyl)lysine from octanoyl-[acyl-carrier-protein]: step 2/2. Its function is as follows. Catalyzes the radical-mediated insertion of two sulfur atoms into the C-6 and C-8 positions of the octanoyl moiety bound to the lipoyl domains of lipoate-dependent enzymes, thereby converting the octanoylated domains into lipoylated derivatives. This is Lipoyl synthase from Thermus thermophilus (strain ATCC 27634 / DSM 579 / HB8).